The chain runs to 307 residues: tRNA dimethylallyltransferase 1 (307 aa).

ATP is bound at residue 11–18 (GPTASGKT). Residue 13–18 (TASGKT) participates in substrate binding. Interaction with substrate tRNA stretches follow at residues 36 to 39 (DSRQ) and 159 to 163 (QRAIR).

The protein belongs to the IPP transferase family. In terms of assembly, monomer. Requires Mg(2+) as cofactor.

The catalysed reaction is adenosine(37) in tRNA + dimethylallyl diphosphate = N(6)-dimethylallyladenosine(37) in tRNA + diphosphate. Functionally, catalyzes the transfer of a dimethylallyl group onto the adenine at position 37 in tRNAs that read codons beginning with uridine, leading to the formation of N6-(dimethylallyl)adenosine (i(6)A). The sequence is that of tRNA dimethylallyltransferase 1 from Parabacteroides distasonis (strain ATCC 8503 / DSM 20701 / CIP 104284 / JCM 5825 / NCTC 11152).